A 296-amino-acid polypeptide reads, in one-letter code: Light-independent protochlorophyllide reductase iron-sulfur ATP-binding protein (296 aa).

ATP-binding positions include 39-44 and K68; that span reads GIGKST. Residue S43 participates in Mg(2+) binding. Residues C124 and C158 each contribute to the [4Fe-4S] cluster site. 209-210 provides a ligand contact to ATP; the sequence is NR.

It belongs to the NifH/BchL/ChlL family. As to quaternary structure, homodimer. Protochlorophyllide reductase is composed of three subunits; ChlL, ChlN and ChlB. The cofactor is [4Fe-4S] cluster.

It catalyses the reaction chlorophyllide a + oxidized 2[4Fe-4S]-[ferredoxin] + 2 ADP + 2 phosphate = protochlorophyllide a + reduced 2[4Fe-4S]-[ferredoxin] + 2 ATP + 2 H2O. It participates in porphyrin-containing compound metabolism; chlorophyll biosynthesis (light-independent). Functionally, component of the dark-operative protochlorophyllide reductase (DPOR) that uses Mg-ATP and reduced ferredoxin to reduce ring D of protochlorophyllide (Pchlide) to form chlorophyllide a (Chlide). This reaction is light-independent. The L component serves as a unique electron donor to the NB-component of the complex, and binds Mg-ATP. This chain is Light-independent protochlorophyllide reductase iron-sulfur ATP-binding protein, found in Synechococcus sp. (strain WH7803).